The sequence spans 293 residues: MASLKDLRARIGSVKSTRKITSAMKMVAAAKLRRAQGRAEAARPYAAAMRRMLAELGASVRNEAGLPQLLAGTGKDKVHLLIPMTSDRGLAGAFNANINRTTRDLIRRLQAEGKTIRLLPTGRKGYEFLMREFSDLIVDHVHGSGGKEVPFSAAAELGERLTAMLEKGEFDVCTVVYNRFNNVMSQTPTEMQLIPLAVPANDTVASGERASYEFEPGEEQLLSSLLPRNLQVQLYATMLESAAGEQGARMTAMDNATRNAGKAIDRLTLTYNRTRQTNITNELIEIISGAQAV.

Belongs to the ATPase gamma chain family. As to quaternary structure, F-type ATPases have 2 components, CF(1) - the catalytic core - and CF(0) - the membrane proton channel. CF(1) has five subunits: alpha(3), beta(3), gamma(1), delta(1), epsilon(1). CF(0) has three main subunits: a, b and c.

Its subcellular location is the cell inner membrane. In terms of biological role, produces ATP from ADP in the presence of a proton gradient across the membrane. The gamma chain is believed to be important in regulating ATPase activity and the flow of protons through the CF(0) complex. The chain is ATP synthase gamma chain from Gluconacetobacter diazotrophicus (strain ATCC 49037 / DSM 5601 / CCUG 37298 / CIP 103539 / LMG 7603 / PAl5).